We begin with the raw amino-acid sequence, 197 residues long: Imidazoleglycerol-phosphate dehydratase (197 aa).

Belongs to the imidazoleglycerol-phosphate dehydratase family.

The protein resides in the cytoplasm. It catalyses the reaction D-erythro-1-(imidazol-4-yl)glycerol 3-phosphate = 3-(imidazol-4-yl)-2-oxopropyl phosphate + H2O. The protein operates within amino-acid biosynthesis; L-histidine biosynthesis; L-histidine from 5-phospho-alpha-D-ribose 1-diphosphate: step 6/9. In Pseudomonas putida (strain ATCC 700007 / DSM 6899 / JCM 31910 / BCRC 17059 / LMG 24140 / F1), this protein is Imidazoleglycerol-phosphate dehydratase.